A 509-amino-acid polypeptide reads, in one-letter code: Maturase K (509 aa).

The protein belongs to the intron maturase 2 family. MatK subfamily.

Its subcellular location is the plastid. The protein localises to the chloroplast. Usually encoded in the trnK tRNA gene intron. Probably assists in splicing its own and other chloroplast group II introns. The sequence is that of Maturase K from Hottonia palustris (Water-violet).